A 358-amino-acid polypeptide reads, in one-letter code: 3-isopropylmalate dehydrogenase (358 aa).

75–88 (GPKWETLPPEKQPE) lines the NAD(+) pocket. The substrate site is built by Arg96, Arg106, Arg135, and Asp225. Mg(2+) contacts are provided by Asp225, Asp249, and Asp253. 283–295 (GSAPDIAGKGVAN) provides a ligand contact to NAD(+).

The protein belongs to the isocitrate and isopropylmalate dehydrogenases family. LeuB type 1 subfamily. Homodimer. Mg(2+) is required as a cofactor. The cofactor is Mn(2+).

The protein resides in the cytoplasm. It catalyses the reaction (2R,3S)-3-isopropylmalate + NAD(+) = 4-methyl-2-oxopentanoate + CO2 + NADH. The protein operates within amino-acid biosynthesis; L-leucine biosynthesis; L-leucine from 3-methyl-2-oxobutanoate: step 3/4. Its function is as follows. Catalyzes the oxidation of 3-carboxy-2-hydroxy-4-methylpentanoate (3-isopropylmalate) to 3-carboxy-4-methyl-2-oxopentanoate. The product decarboxylates to 4-methyl-2 oxopentanoate. This chain is 3-isopropylmalate dehydrogenase, found in Leptospira interrogans serogroup Icterohaemorrhagiae serovar copenhageni (strain Fiocruz L1-130).